We begin with the raw amino-acid sequence, 692 residues long: Elongation factor G (692 aa).

The region spanning 8–283 (NRIRNIGIAA…AVIDYLPAPT (276 aa)) is the tr-type G domain. Residues 17-24 (AHIDAGKT), 81-85 (DTPGH), and 135-138 (NKMD) each bind GTP.

It belongs to the TRAFAC class translation factor GTPase superfamily. Classic translation factor GTPase family. EF-G/EF-2 subfamily.

It localises to the cytoplasm. Catalyzes the GTP-dependent ribosomal translocation step during translation elongation. During this step, the ribosome changes from the pre-translocational (PRE) to the post-translocational (POST) state as the newly formed A-site-bound peptidyl-tRNA and P-site-bound deacylated tRNA move to the P and E sites, respectively. Catalyzes the coordinated movement of the two tRNA molecules, the mRNA and conformational changes in the ribosome. The protein is Elongation factor G of Helicobacter pylori (strain HPAG1).